The primary structure comprises 176 residues: Nucleoside triphosphate/diphosphate phosphatase (176 aa).

The active-site Proton donor is Arg23. Asn87, Asp103, Asp105, Asp107, Asp120, and Glu123 together coordinate Mg(2+).

Belongs to the Ntdp family. Mg(2+) is required as a cofactor.

The enzyme catalyses a ribonucleoside 5'-triphosphate + H2O = a ribonucleoside 5'-diphosphate + phosphate + H(+). It catalyses the reaction a ribonucleoside 5'-diphosphate + H2O = a ribonucleoside 5'-phosphate + phosphate + H(+). Its function is as follows. Has nucleoside phosphatase activity towards nucleoside triphosphates and nucleoside diphosphates. The chain is Nucleoside triphosphate/diphosphate phosphatase from Lactococcus lactis subsp. cremoris (strain MG1363).